The primary structure comprises 288 residues: Diaminopimelate epimerase (288 aa).

Substrate contacts are provided by N14 and N67. C76 functions as the Proton donor in the catalytic mechanism. Residues 77 to 78 (GN), N166, N199, and 217 to 218 (ER) each bind substrate. Catalysis depends on C226, which acts as the Proton acceptor. 227–228 (GT) serves as a coordination point for substrate.

It belongs to the diaminopimelate epimerase family. Homodimer.

Its subcellular location is the cytoplasm. The enzyme catalyses (2S,6S)-2,6-diaminopimelate = meso-2,6-diaminopimelate. It participates in amino-acid biosynthesis; L-lysine biosynthesis via DAP pathway; DL-2,6-diaminopimelate from LL-2,6-diaminopimelate: step 1/1. Its function is as follows. Catalyzes the stereoinversion of LL-2,6-diaminopimelate (L,L-DAP) to meso-diaminopimelate (meso-DAP), a precursor of L-lysine and an essential component of the bacterial peptidoglycan. The sequence is that of Diaminopimelate epimerase from Bacillus cereus (strain ATCC 14579 / DSM 31 / CCUG 7414 / JCM 2152 / NBRC 15305 / NCIMB 9373 / NCTC 2599 / NRRL B-3711).